The chain runs to 644 residues: Threonine--tRNA ligase (644 aa).

Residues 1–61 (MVAITLPDGS…AHDAKVEIVT (61 aa)) form the TGS domain. Residues 242–533 (DHRKIGKALN…LIENYAGWMP (292 aa)) are catalytic. Positions 333, 384, and 510 each coordinate Zn(2+).

This sequence belongs to the class-II aminoacyl-tRNA synthetase family. Homodimer. Zn(2+) serves as cofactor.

The protein resides in the cytoplasm. The enzyme catalyses tRNA(Thr) + L-threonine + ATP = L-threonyl-tRNA(Thr) + AMP + diphosphate + H(+). Catalyzes the attachment of threonine to tRNA(Thr) in a two-step reaction: L-threonine is first activated by ATP to form Thr-AMP and then transferred to the acceptor end of tRNA(Thr). Also edits incorrectly charged L-seryl-tRNA(Thr). In Psychrobacter cryohalolentis (strain ATCC BAA-1226 / DSM 17306 / VKM B-2378 / K5), this protein is Threonine--tRNA ligase.